The chain runs to 296 residues: Gamma-D-glutamyl-L-lysine dipeptidyl-peptidase (296 aa).

Residues tyrosine 90, 199 to 201, and 218 to 219 each bind substrate; these read DCS and DA. Residues 170–295 form the NlpC/P60 domain; that stretch reads KGTAEDIIQT…ELCAVRRCFS (126 aa). Cysteine 200 (nucleophile) is an active-site residue. The Proton acceptor role is filled by histidine 253. Histidine 265 is an active-site residue.

The protein belongs to the peptidase C40 family.

It carries out the reaction The enzyme releases L-Ala-gamma-D-Glu dipeptides from cell wall peptides via cleavage of an L-Ala-gamma-D-Glu-|-L-Lys bond.. Its pathway is cell wall degradation; peptidoglycan degradation. Its function is as follows. Specifically hydrolyzes gamma-D-glutamyl-L-lysine bonds in murein peptides, releasing L-Ala-D-Glu. This chain is Gamma-D-glutamyl-L-lysine dipeptidyl-peptidase (ykfC), found in Bacillus subtilis (strain 168).